The primary structure comprises 369 residues: UDP-glucose 4-epimerase 4 (369 aa).

Position 19 to 50 (19 to 50 (TVLVTGGAGYIGSHTVLQLLAAGFRVVVADSL)) interacts with NAD(+). Ser144 lines the substrate pocket. Residue Tyr168 is the Proton acceptor of the active site.

It belongs to the NAD(P)-dependent epimerase/dehydratase family. NAD(+) serves as cofactor.

It carries out the reaction UDP-alpha-D-glucose = UDP-alpha-D-galactose. The protein operates within carbohydrate metabolism; galactose metabolism. Its function is as follows. Catalyzes the interconversion between UDP-glucose and UDP-galactose. The chain is UDP-glucose 4-epimerase 4 (UGE-4) from Oryza sativa subsp. japonica (Rice).